The sequence spans 134 residues: Large-conductance mechanosensitive channel (134 aa).

2 helical membrane-spanning segments follow: residues 16 to 36 (VIDL…VTAL) and 81 to 101 (GDFI…FIVV).

This sequence belongs to the MscL family. As to quaternary structure, homopentamer.

Its subcellular location is the cell inner membrane. Its function is as follows. Channel that opens in response to stretch forces in the membrane lipid bilayer. May participate in the regulation of osmotic pressure changes within the cell. The polypeptide is Large-conductance mechanosensitive channel (Stenotrophomonas maltophilia (strain K279a)).